The chain runs to 213 residues: CDP-diacylglycerol--inositol 3-phosphatidyltransferase (213 aa).

Over 1–5 the chain is Cytoplasmic; sequence MPDEN. A helical membrane pass occupies residues 6-26; it reads IFLFVPNLIGYARIVFAIISF. A topological domain (lumenal) is located at residue Tyr-27. A helical transmembrane segment spans residues 28–48; it reads FMPCCPLTASSFYLLSGLLDA. Mg(2+)-binding residues include Asp-47 and Asp-50. The Cytoplasmic segment spans residues 49–73; it reads FDGHAARALNQGTRFGAMLDMLTDR. 3 residues coordinate a CDP-1,2-diacyl-sn-glycerol: Gly-51, Arg-55, and Thr-61. Mg(2+)-binding residues include Asp-68 and Asp-72. Asp-72 serves as the catalytic Proton acceptor. A helical transmembrane segment spans residues 74–94; that stretch reads CSTMCLLVNLALLYPGATLFF. Residue Gln-95 is a topological domain, lumenal. The helical transmembrane segment at 96-116 threads the bilayer; sequence ISMSLDVASHWLHLHSSVVRG. Residues 117–139 are Cytoplasmic-facing; sequence SESHKMIDLSGNPVLRIYYTSRP. A helical transmembrane segment spans residues 140 to 160; it reads ALFTLCAGNELFYCLLYLFHF. The Lumenal portion of the chain corresponds to 161–174; that stretch reads SEGPLVGSVGLFRM. A helical transmembrane segment spans residues 175 to 195; sequence GLWVTAPIALLKSLISVIHLI. Residues 196 to 213 lie on the Cytoplasmic side of the membrane; that stretch reads TAARNMAALDAADRAKKK.

It belongs to the CDP-alcohol phosphatidyltransferase class-I family. Mn(2+) is required as a cofactor. Mg(2+) serves as cofactor. In terms of tissue distribution, detected in placenta (at protein level). Widely expressed. Higher expression in adult liver and skeletal muscle, slightly lower levels seen in pancreas, kidney, lung, placenta, brain, heart, leukocyte, colon, small intestine, ovary, testis, prostate, thymus and spleen. In fetus, expressed in kidney, liver, lung and brain.

Its subcellular location is the endoplasmic reticulum membrane. The protein resides in the cell membrane. It catalyses the reaction a CDP-1,2-diacyl-sn-glycerol + myo-inositol = a 1,2-diacyl-sn-glycero-3-phospho-(1D-myo-inositol) + CMP + H(+). Inhibited by PtdIns (product inhibition), phosphatidylinositol phosphate, and nucleoside di- and tri-phosphates. Its function is as follows. Catalyzes the biosynthesis of phosphatidylinositol (PtdIns) as well as PtdIns:inositol exchange reaction. May thus act to reduce an excessive cellular PtdIns content. The exchange activity is due to the reverse reaction of PtdIns synthase and is dependent on CMP, which is tightly bound to the enzyme. The polypeptide is CDP-diacylglycerol--inositol 3-phosphatidyltransferase (Homo sapiens (Human)).